Reading from the N-terminus, the 130-residue chain is UPF0102 protein RSc3265 (130 aa).

The protein belongs to the UPF0102 family.

The protein is UPF0102 protein RSc3265 of Ralstonia nicotianae (strain ATCC BAA-1114 / GMI1000) (Ralstonia solanacearum).